The primary structure comprises 934 residues: Protein translocase subunit SecA (934 aa).

Residues Gln87, 105–109, and Asp515 contribute to the ATP site; that span reads GEGKT. Cys918, Cys920, Cys929, and His930 together coordinate Zn(2+).

Belongs to the SecA family. As to quaternary structure, monomer and homodimer. Part of the essential Sec protein translocation apparatus which comprises SecA, SecYEG and auxiliary proteins SecDF-YajC and YidC. It depends on Zn(2+) as a cofactor.

The protein localises to the cell inner membrane. It localises to the cytoplasm. It carries out the reaction ATP + H2O + cellular proteinSide 1 = ADP + phosphate + cellular proteinSide 2.. Its function is as follows. Part of the Sec protein translocase complex. Interacts with the SecYEG preprotein conducting channel. Has a central role in coupling the hydrolysis of ATP to the transfer of proteins into and across the cell membrane, serving both as a receptor for the preprotein-SecB complex and as an ATP-driven molecular motor driving the stepwise translocation of polypeptide chains across the membrane. The chain is Protein translocase subunit SecA from Ralstonia pickettii (strain 12J).